A 403-amino-acid chain; its full sequence is Methylthioribose-1-phosphate isomerase (403 aa).

Asp-277 functions as the Proton donor in the catalytic mechanism.

Belongs to the eIF-2B alpha/beta/delta subunits family. MtnA subfamily.

The protein localises to the cytoplasm. Its subcellular location is the nucleus. The enzyme catalyses 5-(methylsulfanyl)-alpha-D-ribose 1-phosphate = 5-(methylsulfanyl)-D-ribulose 1-phosphate. It participates in amino-acid biosynthesis; L-methionine biosynthesis via salvage pathway; L-methionine from S-methyl-5-thio-alpha-D-ribose 1-phosphate: step 1/6. In terms of biological role, catalyzes the interconversion of methylthioribose-1-phosphate (MTR-1-P) into methylthioribulose-1-phosphate (MTRu-1-P). The sequence is that of Methylthioribose-1-phosphate isomerase from Lodderomyces elongisporus (strain ATCC 11503 / CBS 2605 / JCM 1781 / NBRC 1676 / NRRL YB-4239) (Yeast).